Reading from the N-terminus, the 668-residue chain is DNA ligase (668 aa).

NAD(+) contacts are provided by residues 35–39 (DQEYD), 84–85 (SL), and glutamate 115. Residue lysine 117 is the N6-AMP-lysine intermediate of the active site. NAD(+) is bound by residues arginine 138, glutamate 172, lysine 288, and lysine 312. Zn(2+) contacts are provided by cysteine 406, cysteine 409, cysteine 425, and cysteine 430. The 80-residue stretch at 589 to 668 (KLEGPLKGLV…EEFFDKYGES (80 aa)) folds into the BRCT domain.

Belongs to the NAD-dependent DNA ligase family. LigA subfamily. The cofactor is Mg(2+). Mn(2+) is required as a cofactor.

The catalysed reaction is NAD(+) + (deoxyribonucleotide)n-3'-hydroxyl + 5'-phospho-(deoxyribonucleotide)m = (deoxyribonucleotide)n+m + AMP + beta-nicotinamide D-nucleotide.. Its function is as follows. DNA ligase that catalyzes the formation of phosphodiester linkages between 5'-phosphoryl and 3'-hydroxyl groups in double-stranded DNA using NAD as a coenzyme and as the energy source for the reaction. It is essential for DNA replication and repair of damaged DNA. In Petrotoga mobilis (strain DSM 10674 / SJ95), this protein is DNA ligase.